Here is a 277-residue protein sequence, read N- to C-terminus: MIEDIKTLREEHVYRAKLAEQAERYDEMAEAMKNLVENCLDQNNSPPGAKGDELTVEERNLLSVAYKNAVGARRASWRIISSVEQKEANRNHMANKALAASYRQKVENELNKICQEILTLLTDKLLPRTTDSESRVFYFKMKGDYYRYISEFSNEEGKKASAEQAEESYKRATDTAEAELPSTHPIRLGLALNYSVFYYEILNQPQKACEMAKLAFDDAITEFDSVSEDSYKDSTLIMQLLRDNLTLWTSDLQTQEQQQQPVGEGAEAPKVEATEQQ.

Residues 252–277 are disordered; sequence LQTQEQQQQPVGEGAEAPKVEATEQQ. Positions 267–277 are enriched in basic and acidic residues; the sequence is EAPKVEATEQQ.

It belongs to the 14-3-3 family.

This Eimeria tenella (Coccidian parasite) protein is 14-3-3 protein.